The chain runs to 366 residues: Chorismate synthase (366 aa).

Residues arginine 48 and arginine 54 each contribute to the NADP(+) site. Residues 129 to 131 (RSS), 241 to 242 (NA), glycine 290, 305 to 309 (KPTSS), and arginine 331 each bind FMN.

Belongs to the chorismate synthase family. Homotetramer. FMNH2 serves as cofactor.

The enzyme catalyses 5-O-(1-carboxyvinyl)-3-phosphoshikimate = chorismate + phosphate. It functions in the pathway metabolic intermediate biosynthesis; chorismate biosynthesis; chorismate from D-erythrose 4-phosphate and phosphoenolpyruvate: step 7/7. Catalyzes the anti-1,4-elimination of the C-3 phosphate and the C-6 proR hydrogen from 5-enolpyruvylshikimate-3-phosphate (EPSP) to yield chorismate, which is the branch point compound that serves as the starting substrate for the three terminal pathways of aromatic amino acid biosynthesis. This reaction introduces a second double bond into the aromatic ring system. The protein is Chorismate synthase of Nitrobacter hamburgensis (strain DSM 10229 / NCIMB 13809 / X14).